The primary structure comprises 141 residues: ATP synthase epsilon chain (141 aa).

This sequence belongs to the ATPase epsilon chain family. In terms of assembly, F-type ATPases have 2 components, CF(1) - the catalytic core - and CF(0) - the membrane proton channel. CF(1) has five subunits: alpha(3), beta(3), gamma(1), delta(1), epsilon(1). CF(0) has three main subunits: a, b and c.

It localises to the cell inner membrane. Produces ATP from ADP in the presence of a proton gradient across the membrane. This is ATP synthase epsilon chain from Chromohalobacter salexigens (strain ATCC BAA-138 / DSM 3043 / CIP 106854 / NCIMB 13768 / 1H11).